A 154-amino-acid polypeptide reads, in one-letter code: MAPARAGCCPLLLLLLGLWVAEVLVRAKPKDMTSSQWFKTQHVQPSPQACNSAMSIINKYTERCKDLNTFLHEPFSSVAITCQTPNIACKNSCKNCHQSHGPMSLTMGELTSGKYPNCRYKEKHLNTPYIVACDPPQQGDPGYPLVPVHLDKVV.

The first 27 residues, 1 to 27, serve as a signal peptide directing secretion; the sequence is MAPARAGCCPLLLLLLGLWVAEVLVRA. The active-site Proton acceptor is His42. Disulfide bonds link Cys50–Cys93, Cys64–Cys118, Cys82–Cys133, and Cys89–Cys96. Residues 65 to 69 and Lys90 each bind substrate; that span reads KDLNT. The active-site Proton donor is the His149.

The protein belongs to the pancreatic ribonuclease family. Expressed prominently in the placenta and is not detected in any other tissues examined.

It is found in the secreted. Has a low ribonuclease activity. This Homo sapiens (Human) protein is Ribonuclease 8 (RNASE8).